The following is a 391-amino-acid chain: Processive diacylglycerol beta-glucosyltransferase (391 aa).

Belongs to the glycosyltransferase 28 family. UgtP subfamily.

Its subcellular location is the cell membrane. It catalyses the reaction a 1,2-diacyl-3-O-(beta-D-glucopyranosyl)-sn-glycerol + UDP-alpha-D-glucose = a 1,2-diacyl-3-O-(beta-D-Glc-(1-&gt;6)-beta-D-Glc)-sn-glycerol + UDP + H(+). The enzyme catalyses a 1,2-diacyl-sn-glycerol + UDP-alpha-D-glucose = a 1,2-diacyl-3-O-(beta-D-glucopyranosyl)-sn-glycerol + UDP + H(+). It participates in glycolipid metabolism; diglucosyl-diacylglycerol biosynthesis. Processive glucosyltransferase involved in the biosynthesis of both the bilayer- and non-bilayer-forming membrane glucolipids. Is able to successively transfer two glucosyl residues to diacylglycerol (DAG), thereby catalyzing the formation of beta-monoglucosyl-DAG (3-O-(beta-D-glucopyranosyl)-1,2-diacyl-sn-glycerol) and beta-diglucosyl-DAG (3-O-(beta-D-glucopyranosyl-beta-(1-&gt;6)-D-glucopyranosyl)-1,2-diacyl-sn-glycerol). Beta-diglucosyl-DAG is the predominant glycolipid found in Bacillales and is also used as a membrane anchor for lipoteichoic acid (LTA). The polypeptide is Processive diacylglycerol beta-glucosyltransferase (Staphylococcus aureus (strain Mu3 / ATCC 700698)).